Reading from the N-terminus, the 244-residue chain is 7-cyano-7-deazaguanine synthase (244 aa).

Position 17 to 27 (17 to 27 (FSGGQDSTTCL)) interacts with ATP. Residues Cys205, Cys220, Cys223, and Cys226 each contribute to the Zn(2+) site.

Belongs to the QueC family. Requires Zn(2+) as cofactor.

The catalysed reaction is 7-carboxy-7-deazaguanine + NH4(+) + ATP = 7-cyano-7-deazaguanine + ADP + phosphate + H2O + H(+). It functions in the pathway purine metabolism; 7-cyano-7-deazaguanine biosynthesis. In terms of biological role, catalyzes the ATP-dependent conversion of 7-carboxy-7-deazaguanine (CDG) to 7-cyano-7-deazaguanine (preQ(0)). This Bordetella parapertussis (strain 12822 / ATCC BAA-587 / NCTC 13253) protein is 7-cyano-7-deazaguanine synthase.